Reading from the N-terminus, the 149-residue chain is 3-dehydroquinate dehydratase (149 aa).

The active-site Proton acceptor is the Tyr-26. The substrate site is built by Asn-77, His-83, and Asp-90. Catalysis depends on His-103, which acts as the Proton donor. Residues 104–105 (LS) and Arg-114 contribute to the substrate site.

This sequence belongs to the type-II 3-dehydroquinase family. In terms of assembly, homododecamer.

The catalysed reaction is 3-dehydroquinate = 3-dehydroshikimate + H2O. Its pathway is metabolic intermediate biosynthesis; chorismate biosynthesis; chorismate from D-erythrose 4-phosphate and phosphoenolpyruvate: step 3/7. Its function is as follows. Catalyzes a trans-dehydration via an enolate intermediate. The polypeptide is 3-dehydroquinate dehydratase (Haemophilus influenzae (strain 86-028NP)).